Consider the following 554-residue polypeptide: Potassium/proton antiporter CemA (554 aa).

A helical membrane pass occupies residues 50–70 (SLFVVLFIPFFINIFTKIYVF). An insert region spans residues 113-410 (KTENFFPEKP…VPYNFNKNTE (298 aa)). 3 helical membrane passes run 429-449 (ISAI…LFLL), 479-499 (MLLF…EVIF), and 514-534 (IIFL…KYWI).

Belongs to the CemA family.

Its subcellular location is the plastid. It localises to the chloroplast inner membrane. It catalyses the reaction K(+)(in) + H(+)(out) = K(+)(out) + H(+)(in). Contributes to K(+)/H(+) antiport activity by supporting proton efflux to control proton extrusion and homeostasis in chloroplasts in a light-dependent manner to modulate photosynthesis. Prevents excessive induction of non-photochemical quenching (NPQ) under continuous-light conditions. Indirectly promotes efficient inorganic carbon uptake into chloroplasts. The sequence is that of Potassium/proton antiporter CemA from Stigeoclonium helveticum (Green alga).